A 226-amino-acid polypeptide reads, in one-letter code: PKHD-type hydroxylase BP3529 (226 aa).

The region spanning 78–178 (KIFPPLFNRY…RISAFFWLQS (101 aa)) is the Fe2OG dioxygenase domain. His-96, Asp-98, and His-159 together coordinate Fe cation. Arg-169 is a binding site for 2-oxoglutarate.

Requires Fe(2+) as cofactor. The cofactor is L-ascorbate.

The polypeptide is PKHD-type hydroxylase BP3529 (Bordetella pertussis (strain Tohama I / ATCC BAA-589 / NCTC 13251)).